The sequence spans 277 residues: Thymidylate synthase (277 aa).

Arg-21 contributes to the dUMP binding site. His-51 provides a ligand contact to (6R)-5,10-methylene-5,6,7,8-tetrahydrofolate. Residue 126-127 (RR) coordinates dUMP. Cys-159 serves as the catalytic Nucleophile. Residues 179 to 182 (RSAD), Asn-190, and 220 to 222 (HLY) each bind dUMP. (6R)-5,10-methylene-5,6,7,8-tetrahydrofolate is bound at residue Asp-182. Ser-276 contributes to the (6R)-5,10-methylene-5,6,7,8-tetrahydrofolate binding site.

This sequence belongs to the thymidylate synthase family. Bacterial-type ThyA subfamily. As to quaternary structure, homodimer.

The protein localises to the cytoplasm. It catalyses the reaction dUMP + (6R)-5,10-methylene-5,6,7,8-tetrahydrofolate = 7,8-dihydrofolate + dTMP. Its pathway is pyrimidine metabolism; dTTP biosynthesis. Functionally, catalyzes the reductive methylation of 2'-deoxyuridine-5'-monophosphate (dUMP) to 2'-deoxythymidine-5'-monophosphate (dTMP) while utilizing 5,10-methylenetetrahydrofolate (mTHF) as the methyl donor and reductant in the reaction, yielding dihydrofolate (DHF) as a by-product. This enzymatic reaction provides an intracellular de novo source of dTMP, an essential precursor for DNA biosynthesis. This is Thymidylate synthase from Hydrogenovibrio crunogenus (strain DSM 25203 / XCL-2) (Thiomicrospira crunogena).